The primary structure comprises 259 residues: Protein FAM220A (259 aa).

Disordered stretches follow at residues 1-44 and 131-154; these read MRDR…ADAP and LGGGPRATDGHRGQCPKGEPRVSR. A compositionally biased stretch (basic and acidic residues) spans 138-152; that stretch reads TDGHRGQCPKGEPRV.

In terms of assembly, interacts with transcriptional activator STAT3; the interaction occurs in both the nucleus and the cytoplasm, is enhanced by IL6 and promotes STAT3 dephosphorylation, leading to negative regulation of STAT3 transcriptional activator activity. Can interact with both unphosphorylated and phosphorylated STAT3 but interacts preferentially with phosphorylated STAT3 in the nucleus. Interacts with protein phosphatase PTPN2/TC45; this promotes interaction of PTPN2 with STAT3, leading to dephosphorylation of STAT3 by PTPN2.

Its subcellular location is the nucleus. It is found in the cytoplasm. The protein localises to the cytoplasmic vesicle. The protein resides in the secretory vesicle. It localises to the acrosome. In terms of biological role, promotes dephosphorylation of transcriptional activator STAT3 by interacting with both STAT3 and protein phosphatase PTPN2. This promotes interaction of PTPN2 with STAT3 and mediates STAT3 dephosphorylation by PTPN2, leading to negative regulation of STAT3 transcriptional activator activity. May be required for spermiogenesis or sperm function. The sequence is that of Protein FAM220A from Homo sapiens (Human).